The following is a 142-amino-acid chain: Nitrogen fixation protein NifU 2 (142 aa).

Positions 1–36 (MKDLFDESLTLDTGSAAPGTAPGRPRRRQPAGGKAP) are disordered. The segment covering 14–23 (GSAAPGTAPG) has biased composition (low complexity).

The protein belongs to the NifU family.

Its function is as follows. May be involved in the formation or repair of [Fe-S] clusters present in iron-sulfur proteins. This chain is Nitrogen fixation protein NifU 2 (nifU2), found in Rhodobacter capsulatus (Rhodopseudomonas capsulata).